The following is a 450-amino-acid chain: Sorting nexin-4 (450 aa).

Residue Met-1 is modified to N-acetylmethionine. Residues 1–46 (MEQAPPDPERQLQPAPLEPLGSPDAGLGAAVGKEAEGAGEESSGVD) are disordered. Ser-22 bears the Phosphoserine mark. The PX domain maps to 61 to 187 (SVSEAEKRTG…YLFLTQEGNW (127 aa)). Arg-106, Ser-108, Lys-132, and Arg-154 together coordinate a 1,2-diacyl-sn-glycero-3-phospho-(1D-myo-inositol-3-phosphate).

Belongs to the sorting nexin family. As to quaternary structure, heterodimer; heterodimerizes with SNX7 or SNX30. Interacts with WWC1/KIBRA. Identified in a complex with WWC1/KIBRA and dynein components DYNLL1 and DYNC1I2. Interacts with BIN1.

It localises to the early endosome membrane. Involved in the regulation of endocytosis and in several stages of intracellular trafficking. Plays a role in recycling endocytosed transferrin receptor and prevent its degradation. Involved in autophagosome assembly by regulating trafficking and recycling of phospholipid scramblase ATG9A. This is Sorting nexin-4 from Homo sapiens (Human).